Consider the following 171-residue polypeptide: Peptide deformylase 1 (171 aa).

Fe cation contacts are provided by Cys-99 and His-141. The active site involves Glu-142.

It belongs to the polypeptide deformylase family. Fe(2+) is required as a cofactor.

The catalysed reaction is N-terminal N-formyl-L-methionyl-[peptide] + H2O = N-terminal L-methionyl-[peptide] + formate. Its function is as follows. Removes the formyl group from the N-terminal Met of newly synthesized proteins. Requires at least a dipeptide for an efficient rate of reaction. N-terminal L-methionine is a prerequisite for activity but the enzyme has broad specificity at other positions. This is Peptide deformylase 1 from Xanthomonas axonopodis pv. citri (strain 306).